Reading from the N-terminus, the 193-residue chain is Fe/S biogenesis protein NfuA (193 aa).

2 residues coordinate [4Fe-4S] cluster: C150 and C153.

It belongs to the NfuA family. As to quaternary structure, homodimer. Requires [4Fe-4S] cluster as cofactor.

Involved in iron-sulfur cluster biogenesis. Binds a 4Fe-4S cluster, can transfer this cluster to apoproteins, and thereby intervenes in the maturation of Fe/S proteins. Could also act as a scaffold/chaperone for damaged Fe/S proteins. The protein is Fe/S biogenesis protein NfuA of Histophilus somni (strain 129Pt) (Haemophilus somnus).